We begin with the raw amino-acid sequence, 393 residues long: NAD(P)H-quinone oxidoreductase subunit H, chloroplastic (393 aa).

This sequence belongs to the complex I 49 kDa subunit family. As to quaternary structure, NDH is composed of at least 16 different subunits, 5 of which are encoded in the nucleus.

The protein localises to the plastid. Its subcellular location is the chloroplast thylakoid membrane. It catalyses the reaction a plastoquinone + NADH + (n+1) H(+)(in) = a plastoquinol + NAD(+) + n H(+)(out). The catalysed reaction is a plastoquinone + NADPH + (n+1) H(+)(in) = a plastoquinol + NADP(+) + n H(+)(out). Its function is as follows. NDH shuttles electrons from NAD(P)H:plastoquinone, via FMN and iron-sulfur (Fe-S) centers, to quinones in the photosynthetic chain and possibly in a chloroplast respiratory chain. The immediate electron acceptor for the enzyme in this species is believed to be plastoquinone. Couples the redox reaction to proton translocation, and thus conserves the redox energy in a proton gradient. The polypeptide is NAD(P)H-quinone oxidoreductase subunit H, chloroplastic (Morus indica (Mulberry)).